A 161-amino-acid chain; its full sequence is Phosphopantetheine adenylyltransferase (161 aa).

Ser9 contacts substrate. ATP-binding positions include Ser9 to Phe10 and His17. Substrate is bound by residues Lys41, Leu73, and Arg87. ATP contacts are provided by residues Gly88–Arg90, Glu98, and Thr123–Thr129.

It belongs to the bacterial CoaD family. In terms of assembly, homohexamer. Requires Mg(2+) as cofactor.

The protein localises to the cytoplasm. The catalysed reaction is (R)-4'-phosphopantetheine + ATP + H(+) = 3'-dephospho-CoA + diphosphate. It participates in cofactor biosynthesis; coenzyme A biosynthesis; CoA from (R)-pantothenate: step 4/5. Its function is as follows. Reversibly transfers an adenylyl group from ATP to 4'-phosphopantetheine, yielding dephospho-CoA (dPCoA) and pyrophosphate. The sequence is that of Phosphopantetheine adenylyltransferase from Psychromonas ingrahamii (strain DSM 17664 / CCUG 51855 / 37).